Reading from the N-terminus, the 292-residue chain is Large ribosomal subunit protein bL19m (292 aa).

The segment at 39–68 is disordered; sequence GPGRRQITGPSEPGVFQPPPKPVIVDKRGP. The residue at position 77 (Ser77) is a Phosphoserine.

It belongs to the bacterial ribosomal protein bL19 family. Component of the mitochondrial ribosome large subunit (39S) which comprises a 16S rRNA and about 50 distinct proteins.

Its subcellular location is the mitochondrion. The sequence is that of Large ribosomal subunit protein bL19m (MRPL19) from Bos taurus (Bovine).